Consider the following 447-residue polypeptide: Tubulin beta-6 chain (447 aa).

GTP contacts are provided by Gln11, Glu69, Ser138, Gly142, Thr143, Gly144, Asn204, and Asn226. Glu69 lines the Mg(2+) pocket. Positions 426 to 447 are disordered; that stretch reads QDATAEEEGEFDEDEELDDGMM. Residues 429 to 447 are compositionally biased toward acidic residues; sequence TAEEEGEFDEDEELDDGMM.

This sequence belongs to the tubulin family. Dimer of alpha and beta chains. A typical microtubule is a hollow water-filled tube with an outer diameter of 25 nm and an inner diameter of 15 nM. Alpha-beta heterodimers associate head-to-tail to form protofilaments running lengthwise along the microtubule wall with the beta-tubulin subunit facing the microtubule plus end conferring a structural polarity. Microtubules usually have 13 protofilaments but different protofilament numbers can be found in some organisms and specialized cells. Mg(2+) is required as a cofactor.

It is found in the cytoplasm. The protein localises to the cytoskeleton. Tubulin is the major constituent of microtubules, a cylinder consisting of laterally associated linear protofilaments composed of alpha- and beta-tubulin heterodimers. Microtubules grow by the addition of GTP-tubulin dimers to the microtubule end, where a stabilizing cap forms. Below the cap, tubulin dimers are in GDP-bound state, owing to GTPase activity of alpha-tubulin. The polypeptide is Tubulin beta-6 chain (TUBB6) (Ectocarpus variabilis (Brown alga)).